The sequence spans 89 residues: Small ribosomal subunit protein bS20 (89 aa).

Belongs to the bacterial ribosomal protein bS20 family.

Functionally, binds directly to 16S ribosomal RNA. This is Small ribosomal subunit protein bS20 from Wolbachia sp. subsp. Brugia malayi (strain TRS).